The chain runs to 842 residues: Pentatricopeptide repeat-containing protein At3g22690 (842 aa).

PPR repeat units lie at residues 98-132 (TCFM…GISP), 133-167 (DKYT…GYAK), 168-202 (DLFV…NVVS), 203-234 (WTSM…EVTP), 235-269 (NSVT…GIEV), 270-300 (NDLM…YGAS), 301-335 (NLDL…GVRP), 336-370 (DRIS…GFES), 371-401 (WDNI…MSNK), 402-436 (TVVT…NIVS), 437-463 (WNTI…MQSQ), 469-503 (DGVT…GIQL), 504-534 (DVRL…LTNR), 535-569 (DVSA…GLKP), 570-605 (DGVA…GVSP), and 606-636 (EDVH…MPME). The segment at 641–716 (IWNSLLAACR…PPGTSSIQIR (76 aa)) is type E motif. The tract at residues 717 to 747 (GKTHEFTSGDESHPEMPNIEAMLDEVSQRAS) is type E(+) motif. Residues 748–842 (HLGHVPDLSN…QGKCSCGDFW (95 aa)) form a type DYW motif region.

The protein belongs to the PPR family. PCMP-H subfamily.

The chain is Pentatricopeptide repeat-containing protein At3g22690 (PCMP-H56) from Arabidopsis thaliana (Mouse-ear cress).